The chain runs to 259 residues: 5'-nucleotidase SurE (259 aa).

A divalent metal cation-binding residues include Asp8, Asp9, Ser40, and Asn92.

This sequence belongs to the SurE nucleotidase family. A divalent metal cation is required as a cofactor.

The protein resides in the cytoplasm. The catalysed reaction is a ribonucleoside 5'-phosphate + H2O = a ribonucleoside + phosphate. Nucleotidase that shows phosphatase activity on nucleoside 5'-monophosphates. The chain is 5'-nucleotidase SurE from Xanthomonas oryzae pv. oryzae (strain MAFF 311018).